We begin with the raw amino-acid sequence, 630 residues long: Membrane protein insertase YidC (630 aa).

5 helical membrane passes run 10-30 (LMFL…VMGP), 396-416 (MVGN…LILF), 470-490 (VPML…TVTI), 528-548 (LIGA…LYGF), and 571-591 (FFPI…VIYW).

This sequence belongs to the OXA1/ALB3/YidC family. Type 1 subfamily. As to quaternary structure, interacts with the Sec translocase complex via SecD. Specifically interacts with transmembrane segments of nascent integral membrane proteins during membrane integration.

It is found in the cell inner membrane. Its function is as follows. Required for the insertion and/or proper folding and/or complex formation of integral membrane proteins into the membrane. Involved in integration of membrane proteins that insert both dependently and independently of the Sec translocase complex, as well as at least some lipoproteins. Aids folding of multispanning membrane proteins. The protein is Membrane protein insertase YidC of Caulobacter sp. (strain K31).